Here is a 573-residue protein sequence, read N- to C-terminus: Developmental and secondary metabolism regulator veA (573 aa).

Residues 1-11 are compositionally biased toward pro residues; sequence MATLAAPPPPL. 2 disordered regions span residues 1-24 and 39-63; these read MATL…SRIT and QPKR…DPPP. The Velvet domain maps to 27–230; that stretch reads GKKITYKLNI…AEQGCRVRIR (204 aa). The Nuclear localization signal motif lies at 41-46; it reads KRARAC. A phosphothreonine mark is found at T167 and T170. Residue S183 is modified to Phosphoserine. Disordered stretches follow at residues 236-295, 307-367, and 384-573; these read RRRG…RRPS, YQRP…SYQS, and SHIP…ATMR. A compositionally biased stretch (basic and acidic residues) spans 241-260; sequence KRTEDYDYDNERGYNNRRPD. Y254 carries the phosphotyrosine modification. Composition is skewed to pro residues over residues 318–339 and 347–361; these read SSTP…PSTP and PAPP…PPLH. Residues 387–412 are compositionally biased toward low complexity; it reads PQQTTTPTHPYSPRSSISHSRNQSIS. The segment covering 452-493 has biased composition (polar residues); it reads PSVNSRSKTPSNMITSLPPIQSLSELPSTTSQPSSAIGSSPA. The interval 459 to 498 is PEST; sequence KTPSNMITSLPPIQSLSELPSTTSQPSSAIGSSPANEPGP. A compositionally biased stretch (basic and acidic residues) spans 510–522; sequence RTYEESFGHDDRP.

The protein belongs to the velvet family. VeA subfamily. Component of the heterotrimeric velvet complex composed of laeA, veA and velB; VeA acting as a bridging protein between laeA and velB. Interacts with the light-sensing phytochrome fphA. Interacts with llmF. Post-translationally, phosphorylated at Thr-167, Thr-170, Ser-183 and Tyr-254. Thr-167 should be phosphorylated and T170 and S183 should be dephosphorylated to achieve light induction of conidiation. Phosphorylation of Ser-183 and Tyr-254 influence sterigmatocystin production in a light-independent manner. Phosphorylation of Thr-167 and Thr-170 modulates expression of veA.

The protein resides in the nucleus. It is found in the cytoplasm. Functionally, component of the velvet transcription factor complex that controls sexual/asexual developmental ratio in response to light, promoting sexual development in the darkness while stimulating asexual sporulation under illumination. The velvet complex acts as a global regulator for secondary metabolite gene expression. Controls the expression of the sterigmatocystin and penicillin gene clusters. Represses the cryptic ors gene cluster producing orsellinic acid and its F9775 derivatives in a laeA-independent manner. Required for full induction of faoA gene expression by fructosyl amines. Positively regulates the expression of the early sexual development gene esdC. Controls the expression of mannoprotein mnpA. The protein is Developmental and secondary metabolism regulator veA of Emericella nidulans (strain FGSC A4 / ATCC 38163 / CBS 112.46 / NRRL 194 / M139) (Aspergillus nidulans).